The sequence spans 469 residues: Protein RUFY3 (469 aa).

Residues Thr-5 and Thr-12 each carry the phosphothreonine modification. Residues Ser-34 and Ser-49 each carry the phosphoserine modification. Thr-51 is modified (phosphothreonine). Residues 95–227 (DSDYAPLQQF…IDANFCMKGE (133 aa)) enclose the RUN domain. 2 coiled-coil regions span residues 271 to 362 (NRHL…VEKE) and 422 to 463 (KSEL…AANK).

As to quaternary structure, interacts with PAK1. Interacts (via C-terminus) with Ras-related Rab-5 proteins. Interacts (via C-terminus) with Ras-related Rap-2 proteins. Interacts with PIK3CA and PIK3R1. Interacts (via N-terminus) with FSCN1; this interaction induces neuron axon development. Interacts with DBN1. Interacts (via the second coiled coil) with GTP-, but not GDP-bound ARL8A and ARL8B. Interacts with dynactin/DCTN1 and the dynein intermediate chain DYNC1I1/2. Directly interacts with DYNC1LI1. Post-translationally, phosphorylated by PAK1.

It localises to the cytoplasm. The protein resides in the endomembrane system. Its subcellular location is the cell projection. The protein localises to the invadopodium. It is found in the growth cone. It localises to the perikaryon. The protein resides in the filopodium. Its subcellular location is the lamellipodium. The protein localises to the lysosome. Functionally, ARL8 effector that promotes the coupling of endolysosomes to dynein-dynactin for retrograde transport along microtubules. Acts by binding both GTP-bound ARL8 and dynein-dynactin. In nonneuronal cells, promotes concentration of endolysosomes in the juxtanuclear area. In hippocampal neurons, drives retrograde transport of endolysosomes from the axon to the soma. Plays a role in the generation of neuronal polarity formation and axon growth. Implicated in the formation of a single axon by developing neurons. May inhibit the formation of additional axons by inhibition of PI3K in minor neuronal processes. Plays a role in the formation of F-actin-enriched protrusive structures at the cell periphery. Plays a role in cytoskeletal organization by regulating the subcellular localization of FSCN1 and DBN1 at axonal growth cones. The protein is Protein RUFY3 of Pongo abelii (Sumatran orangutan).